The sequence spans 318 residues: Na(+)-translocating NADH-quinone reductase subunit C (318 aa).

The chain crosses the membrane as a helical span at residues 13–33; sequence WYIILFIFVLSLVAGTLLSSV. Threonine 281 carries the post-translational modification FMN phosphoryl threonine.

Belongs to the NqrC family. As to quaternary structure, composed of six subunits; NqrA, NqrB, NqrC, NqrD, NqrE and NqrF. Requires FMN as cofactor.

It is found in the cell inner membrane. It catalyses the reaction a ubiquinone + n Na(+)(in) + NADH + H(+) = a ubiquinol + n Na(+)(out) + NAD(+). NQR complex catalyzes the reduction of ubiquinone-1 to ubiquinol by two successive reactions, coupled with the transport of Na(+) ions from the cytoplasm to the periplasm. NqrA to NqrE are probably involved in the second step, the conversion of ubisemiquinone to ubiquinol. The chain is Na(+)-translocating NADH-quinone reductase subunit C from Chlamydia muridarum (strain MoPn / Nigg).